The primary structure comprises 199 residues: Probable GTP-binding protein EngB (199 aa).

The region spanning 22–196 is the EngB-type G domain; it reads NWPEFAFSGR…GKFILDLVDS (175 aa). Residues 30 to 37, 57 to 61, 75 to 78, 142 to 145, and 175 to 177 contribute to the GTP site; these read GRSNVGKS, GRTQS, DLPG, TKVD, and FSA. The Mg(2+) site is built by serine 37 and threonine 59.

It belongs to the TRAFAC class TrmE-Era-EngA-EngB-Septin-like GTPase superfamily. EngB GTPase family. Mg(2+) serves as cofactor.

In terms of biological role, necessary for normal cell division and for the maintenance of normal septation. The protein is Probable GTP-binding protein EngB of Halothermothrix orenii (strain H 168 / OCM 544 / DSM 9562).